A 205-amino-acid chain; its full sequence is Methylthioribulose-1-phosphate dehydratase (205 aa).

Residue cysteine 75 coordinates substrate. Residues histidine 93 and histidine 95 each contribute to the Zn(2+) site. The active-site Proton donor/acceptor is the glutamate 116. A Zn(2+)-binding site is contributed by histidine 171.

This sequence belongs to the aldolase class II family. MtnB subfamily. Requires Zn(2+) as cofactor.

It is found in the cytoplasm. The enzyme catalyses 5-(methylsulfanyl)-D-ribulose 1-phosphate = 5-methylsulfanyl-2,3-dioxopentyl phosphate + H2O. The protein operates within amino-acid biosynthesis; L-methionine biosynthesis via salvage pathway; L-methionine from S-methyl-5-thio-alpha-D-ribose 1-phosphate: step 2/6. Catalyzes the dehydration of methylthioribulose-1-phosphate (MTRu-1-P) into 2,3-diketo-5-methylthiopentyl-1-phosphate (DK-MTP-1-P). This Kluyveromyces lactis (strain ATCC 8585 / CBS 2359 / DSM 70799 / NBRC 1267 / NRRL Y-1140 / WM37) (Yeast) protein is Methylthioribulose-1-phosphate dehydratase.